The sequence spans 546 residues: Glucose-6-phosphate isomerase (546 aa).

Glu-356 acts as the Proton donor in catalysis. Residues His-387 and Lys-507 contribute to the active site.

This sequence belongs to the GPI family.

It is found in the cytoplasm. It catalyses the reaction alpha-D-glucose 6-phosphate = beta-D-fructose 6-phosphate. It participates in carbohydrate biosynthesis; gluconeogenesis. It functions in the pathway carbohydrate degradation; glycolysis; D-glyceraldehyde 3-phosphate and glycerone phosphate from D-glucose: step 2/4. Catalyzes the reversible isomerization of glucose-6-phosphate to fructose-6-phosphate. This Syntrophus aciditrophicus (strain SB) protein is Glucose-6-phosphate isomerase.